The sequence spans 404 residues: MSPSDVPINWKRNLTVTWLGCFLTGAAFSLVMPFLPLYVEQLGVTGHSALNMWSGLVFSITFLFSAIASPFWGGLADRKGRKIILLRSALGMAIVMLLMGMAQNIWQFLILRALLGLLGGFIPNANALIATQVPRHKSGWALGTLSTGGVSGALLGPLAGGLLADHYGLRPVFFITASVLFICFLLTFFFIRENFLPVSKKEMLHVREVVASLKNPRLVLSLFVTTLIIQVATGSIAPILTLYVRELAGNVSNIAFISGMIASVPGVAALLSAPRLGKLGDRIGPEKILIVALIISVLLLIPMSFVQTPWQLALLRFLLGAADGALLPAVQTLLVYNSTNQIAGRIFSYNQSFRDIGNVTGPLMGAAISASYGFRAVFCVTAGVVLFNAIYSWNSLRRRRLAIE.

11 consecutive transmembrane segments (helical) span residues 19–39, 56–76, 90–110, 113–133, 144–164, 171–191, 222–242, 254–274, 288–308, 317–337, and 376–396; these read LGCF…PLYV, LVFS…GGLA, LGMA…QFLI, ALLG…ATQV, TLST…GLLA, PVFF…FFFI, LFVT…ILTL, IAFI…LSAP, ILIV…FVQT, FLLG…LVYN, and AVFC…WNSL.

It belongs to the major facilitator superfamily. DHA1 family. MdtG (TC 2.A.1.2.20) subfamily.

The protein resides in the cell inner membrane. The chain is Multidrug resistance protein MdtG from Salmonella typhi.